A 313-amino-acid polypeptide reads, in one-letter code: tRNA dimethylallyltransferase (313 aa).

Residue 9–16 (GPTATGKS) coordinates ATP. Residue 11–16 (TATGKS) participates in substrate binding.

Belongs to the IPP transferase family. As to quaternary structure, monomer. It depends on Mg(2+) as a cofactor.

It carries out the reaction adenosine(37) in tRNA + dimethylallyl diphosphate = N(6)-dimethylallyladenosine(37) in tRNA + diphosphate. In terms of biological role, catalyzes the transfer of a dimethylallyl group onto the adenine at position 37 in tRNAs that read codons beginning with uridine, leading to the formation of N6-(dimethylallyl)adenosine (i(6)A). The protein is tRNA dimethylallyltransferase of Nocardia farcinica (strain IFM 10152).